A 656-amino-acid polypeptide reads, in one-letter code: MAMARLTPNGVAAALAGDTNLKPVLQIVELRGVQVNGAGVTRGERFRAVVSDGTAASSALFAAQLSDHARSGALRRGSIVQLSEYVINEVGPRRIIVILNLEVLVSECEIIGNPTALSETGSPIPNPTRVEQFNGAPQYGLMAGNSSNTTTKPSDNVPLFQNSMAGNSSNFATRPSDKVPVFQPTVQPSYRPAPNYKNHGAIMKNEAPARIIPISALNPYQGRWAIKARVTAKGDIRRYHNAKGDGKVFSFDLLDSDGGEIRVTCFNALLDRFYEVVEVGKVYVVSRGNLRPAQKNYNHLNNEWEILLENGSTVDLCPDENSSIPTQRFDFRPINEIEDAQNNAILDIIGVVTSVNPCTTIQRKNGMETQKRTMNLKDMSGRSVEVTMWGDFCNREGSQLQGMVERGIFPVLAVKAGKVSDFSGKSVGTISSTQLFINPDSAEAHSLRQWFDSGGRDASTQSISRDITPGASRNEIRKTVAQIKDEGLGMGDKPDWITVKATVIFFKNESFFYTACPNMIGDRQCNKKVTKSTNGNWTCDKCDREFEECDYRYLLQFQIQDHSGTAWVTAFQEAGQELLGCSATELNALKEREDPRFADTMLNCLFQEYLLRLKVKEESYGDERKVKNTAVKVEKVDPSGESKFLLDLISKSSALH.

The OB DNA-binding region spans 225–307; that stretch reads AIKARVTAKG…NHLNNEWEIL (83 aa). A C4-type zinc finger spans residues 516-542; sequence CPNMIGDRQCNKKVTKSTNGNWTCDKC.

Belongs to the replication factor A protein 1 family. Heterotrimer of RPA1, RPA2 and RPA3 (canonical replication protein A complex). Interacts with RPA2B. In terms of tissue distribution, expressed in root tips, roots, shoot apical meristem (SAM), young leaves, flag leaves and ears, and at lower levels in mature leaves.

It is found in the nucleus. In terms of biological role, component of the replication protein A complex (RPA) required for DNA recombination, repair and replication. The activity of RPA is mediated by single-stranded DNA binding and protein interactions. Plays an essential role in meiotic and somatic DNA repair, but is dispensable for DNA replication and homologous recombination. Is essential for normal progression through meiosis in pollen mother cells. Is involved in repair of double-strand DNA breaks (DSBs) induced by genotoxic stresses. This chain is Replication protein A 70 kDa DNA-binding subunit A (RPA1A), found in Oryza sativa subsp. japonica (Rice).